Reading from the N-terminus, the 286-residue chain is Aminoglycoside N(3)-acetyltransferase III (286 aa).

It belongs to the antibiotic N-acetyltransferase family.

The catalysed reaction is a 2-deoxystreptamine antibiotic + acetyl-CoA = an N(3)-acetyl-2-deoxystreptamine antibiotic + CoA + H(+). In terms of biological role, resistance to antibiotics containing the 2-deoxy-streptamine ring including gentamicin, kanamycin, tobramycin, neomycin and apramycin. This Salmonella sp protein is Aminoglycoside N(3)-acetyltransferase III (aacC3).